Here is a 90-residue protein sequence, read N- to C-terminus: Small ribosomal subunit protein uS15c (90 aa).

It belongs to the universal ribosomal protein uS15 family. As to quaternary structure, part of the 30S ribosomal subunit.

Its subcellular location is the plastid. It localises to the chloroplast. This is Small ribosomal subunit protein uS15c (rps15-A) from Brachypodium distachyon (Purple false brome).